The primary structure comprises 210 residues: T-cell surface glycoprotein CD8 beta chain (210 aa).

An N-terminal signal peptide occupies residues 1–21; the sequence is MRPRLWLLLAAQLTVLHGNSV. An Ig-like V-type domain is found at 22-132; the sequence is LQQTPAYIKV…ELTFGKGTQL (111 aa). Residues 22 to 170 lie on the Extracellular side of the membrane; it reads LQQTPAYIKV…ETQKGPLCSP (149 aa). Cysteines 41 and 116 form a disulfide. N-linked (GlcNAc...) asparagine glycosylation is present at asparagine 102. Residues 171 to 191 traverse the membrane as a helical segment; sequence ITLGLLVAGVLVLLVSLGVAI. Residues 192–210 lie on the Cytoplasmic side of the membrane; that stretch reads HLCCRRRRARLRFMKQFYK. A Phosphotyrosine modification is found at tyrosine 209.

In terms of assembly, forms disulfide-linked heterodimers with CD8A at the cell surface. Interacts with CD3D; this interaction couples TCR-CD3 with CD8. Interacts with LCK. In terms of processing, phosphorylated as a consequence of T-cell activation. Palmitoylated at the cytoplasmic tail and thereby targets the heterodimer CD8A/CD8B to lipid rafts unlike CD8A homodimers. As to expression, isoform 1, isoform 3, isoform 5, isoform 6, isoform 7 and isoform 8 are expressed in both thymus and peripheral CD8+ T-cells. Expression of isoform 1 is higher in thymus CD8+ T-cells than in peripheral CD8+ T-cells. Expression of isoform 6 is higher in peripheral CD8+ T-cells than in thymus CD8+ T-cells.

It localises to the cell membrane. The protein resides in the secreted. Functionally, integral membrane glycoprotein that plays an essential role in the immune response and serves multiple functions in responses against both external and internal offenses. In T-cells, functions primarily as a coreceptor for MHC class I molecule:peptide complex. The antigens presented by class I peptides are derived from cytosolic proteins while class II derived from extracellular proteins. Interacts simultaneously with the T-cell receptor (TCR) and the MHC class I proteins presented by antigen presenting cells (APCs). In turn, recruits the Src kinase LCK to the vicinity of the TCR-CD3 complex. A palmitoylation site in the cytoplasmic tail of CD8B chain contributes to partitioning of CD8 into the plasma membrane lipid rafts where signaling proteins are enriched. Once LCK recruited, it initiates different intracellular signaling pathways by phosphorylating various substrates ultimately leading to lymphokine production, motility, adhesion and activation of cytotoxic T-lymphocytes (CTLs). Additionally, plays a critical role in thymic selection of CD8+ T-cells. The chain is T-cell surface glycoprotein CD8 beta chain (CD8B) from Homo sapiens (Human).